The chain runs to 204 residues: Elongation factor Ts (204 aa).

Residues 87 to 90 (TDFV) are involved in Mg(2+) ion dislocation from EF-Tu.

The protein belongs to the EF-Ts family.

The protein localises to the cytoplasm. Functionally, associates with the EF-Tu.GDP complex and induces the exchange of GDP to GTP. It remains bound to the aminoacyl-tRNA.EF-Tu.GTP complex up to the GTP hydrolysis stage on the ribosome. The protein is Elongation factor Ts of Frankia casuarinae (strain DSM 45818 / CECT 9043 / HFP020203 / CcI3).